Consider the following 477-residue polypeptide: Zinc metalloproteinase/disintegrin (477 aa).

An N-terminal signal peptide occupies residues 1 to 20 (MIEVLLVTICLAAFPYQGSS). Residues 21-187 (IILESGNVND…PIKKASQSNL (167 aa)) constitute a propeptide that is removed on maturation. A Peptidase M12B domain is found at 193 to 389 (RYIELFLVVD…DNPQCILNKQ (197 aa)). Ca(2+)-binding residues include glutamate 196 and aspartate 280. 3 disulfides stabilise this stretch: cysteine 304-cysteine 384, cysteine 344-cysteine 368, and cysteine 346-cysteine 351. Position 329 (histidine 329) interacts with Zn(2+). Residue glutamate 330 is part of the active site. Positions 333 and 339 each coordinate Zn(2+). Residues cysteine 384 and asparagine 387 each coordinate Ca(2+). Residues 390–404 (LRTDTVSTPVSGKNF) constitute a propeptide that is removed on maturation. In terms of domain architecture, Disintegrin spans 396-477 (STPVSGKNFG…AGCPRNPFHA (82 aa)). Intrachain disulfides connect cysteine 410-cysteine 425, cysteine 412-cysteine 420, cysteine 419-cysteine 442, cysteine 433-cysteine 439, cysteine 438-cysteine 463, and cysteine 451-cysteine 470. Positions 455-457 (RGD) match the Cell attachment site motif.

Belongs to the venom metalloproteinase (M12B) family. P-II subfamily. P-IIa sub-subfamily. In terms of assembly, monomer. It depends on Zn(2+) as a cofactor. As to expression, expressed by the venom gland.

The protein localises to the secreted. With respect to regulation, inhibited by 1,10-phenanthroline and EDTA. In terms of biological role, impairs hemostasis in the envenomed animal. Does not exhibit detectable plasminogen activating activity. Has hemagglutinating activity on red blood cells. Cleaves insulin B chain at '38-Ala-|-Leu-39' and '40-Tyr-|-Leu-41' bonds. This recombinant protein shows high inhibitory activity on collagen-induced platelet aggregation. The protein is Zinc metalloproteinase/disintegrin of Bothrops jararaca (Jararaca).